A 460-amino-acid chain; its full sequence is Kynureninase (460 aa).

Pyridoxal 5'-phosphate-binding positions include L127, T128, 165–168 (FPSD), D249, H252, and Y274. K275 bears the N6-(pyridoxal phosphate)lysine mark. 2 residues coordinate pyridoxal 5'-phosphate: W304 and N332.

Belongs to the kynureninase family. Homodimer. It depends on pyridoxal 5'-phosphate as a cofactor.

Its subcellular location is the cytoplasm. It carries out the reaction L-kynurenine + H2O = anthranilate + L-alanine + H(+). It catalyses the reaction 3-hydroxy-L-kynurenine + H2O = 3-hydroxyanthranilate + L-alanine + H(+). It functions in the pathway amino-acid degradation; L-kynurenine degradation; L-alanine and anthranilate from L-kynurenine: step 1/1. It participates in cofactor biosynthesis; NAD(+) biosynthesis; quinolinate from L-kynurenine: step 2/3. In terms of biological role, catalyzes the cleavage of L-kynurenine (L-Kyn) and L-3-hydroxykynurenine (L-3OHKyn) into anthranilic acid (AA) and 3-hydroxyanthranilic acid (3-OHAA), respectively. The polypeptide is Kynureninase (Monosiga brevicollis (Choanoflagellate)).